Consider the following 907-residue polypeptide: Probable dipeptidyl-aminopeptidase B (907 aa).

Over residues 1–26 (MPRQRAPKEEEAELLTKQERSTRSSE) the composition is skewed to basic and acidic residues. Residues 1–70 (MPRQRAPKEE…EKYTDEDDEA (70 aa)) form a disordered region. At 1–93 (MPRQRAPKEE…PVAVDKKTRR (93 aa)) the chain is on the cytoplasmic side. The span at 30 to 44 (DASVSSISTTSLVLE) shows a compositional bias: low complexity. Residues 94-114 (WLWIVGIACVTGWALALVFFL) form a helical; Signal-anchor for type II membrane protein membrane-spanning segment. The Vacuolar segment spans residues 115–907 (MSGSYKHVST…SQVDARLERR (793 aa)). Asn-560 carries an N-linked (GlcNAc...) asparagine glycan. The active-site Charge relay system is Ser-751. Asn-805 carries an N-linked (GlcNAc...) asparagine glycan. Active-site charge relay system residues include Asp-828 and His-861.

This sequence belongs to the peptidase S9B family.

The protein localises to the vacuole membrane. It catalyses the reaction Release of an N-terminal dipeptide, Xaa-Yaa-|-Zaa-, from a polypeptide, preferentially when Yaa is Pro, provided Zaa is neither Pro nor hydroxyproline.. Its function is as follows. Type IV dipeptidyl-peptidase which removes N-terminal dipeptides sequentially from polypeptides having unsubstituted N-termini provided that the penultimate residue is proline. This is Probable dipeptidyl-aminopeptidase B (dapB) from Pyrenophora teres f. teres (strain 0-1) (Barley net blotch fungus).